Reading from the N-terminus, the 239-residue chain is Glucosamine-6-phosphate deaminase (239 aa).

D62 serves as the catalytic Proton acceptor; for enolization step. Residue N128 is the For ring-opening step of the active site. Catalysis depends on H130, which acts as the Proton acceptor; for ring-opening step. E135 acts as the For ring-opening step in catalysis.

This sequence belongs to the glucosamine/galactosamine-6-phosphate isomerase family. NagB subfamily.

It carries out the reaction alpha-D-glucosamine 6-phosphate + H2O = beta-D-fructose 6-phosphate + NH4(+). It participates in amino-sugar metabolism; N-acetylneuraminate degradation; D-fructose 6-phosphate from N-acetylneuraminate: step 5/5. Catalyzes the reversible isomerization-deamination of glucosamine 6-phosphate (GlcN6P) to form fructose 6-phosphate (Fru6P) and ammonium ion. The chain is Glucosamine-6-phosphate deaminase from Lactobacillus helveticus (strain DPC 4571).